A 109-amino-acid chain; its full sequence is Mitochondrial import receptor subunit TOM22 homolog (109 aa).

Over 1 to 60 (MALVRDDFDDIPDSEIHETIVERIEGLGEMFPDALRSAVHSTVDWSIWGVKGVFSLTKST) the chain is Cytoplasmic. A helical transmembrane segment spans residues 61 to 77 (IWVVSTTSLIAFLPYII). The Mitochondrial intermembrane segment spans residues 78–109 (EKERSDLEKTQVAQQRQMLLGPSAAIQQAKTA).

Belongs to the Tom22 family. Forms part of the preprotein translocase complex of the outer mitochondrial membrane (TOM complex).

The protein localises to the mitochondrion outer membrane. Central receptor component of the translocase of the outer membrane of mitochondria (TOM complex) responsible for the recognition and translocation of cytosolically synthesized mitochondrial preproteins. Together with the peripheral receptor tomm-20 functions as the transit peptide receptor and facilitates the movement of preproteins into the translocation pore. The protein is Mitochondrial import receptor subunit TOM22 homolog of Caenorhabditis elegans.